We begin with the raw amino-acid sequence, 137 residues long: Putative pre-16S rRNA nuclease (137 aa).

Belongs to the YqgF nuclease family.

The protein localises to the cytoplasm. Its function is as follows. Could be a nuclease involved in processing of the 5'-end of pre-16S rRNA. This chain is Putative pre-16S rRNA nuclease, found in Bacillus cytotoxicus (strain DSM 22905 / CIP 110041 / 391-98 / NVH 391-98).